Consider the following 228-residue polypeptide: Ureidoacrylate amidohydrolase RutB (228 aa).

The active-site Proton acceptor is aspartate 23. Lysine 132 is an active-site residue. Cysteine 165 (nucleophile) is an active-site residue.

Belongs to the isochorismatase family. RutB subfamily.

It carries out the reaction (Z)-3-ureidoacrylate + H2O + H(+) = (Z)-3-aminoacrylate + NH4(+) + CO2. The catalysed reaction is (Z)-3-ureidoacrylate + H2O = (Z)-3-aminoacrylate + carbamate + H(+). The enzyme catalyses (Z)-2-methylureidoacrylate + H2O + H(+) = (Z)-2-methylaminoacrylate + NH4(+) + CO2. Hydrolyzes ureidoacrylate to form aminoacrylate and carbamate. The carbamate hydrolyzes spontaneously, thereby releasing one of the nitrogen atoms of the pyrimidine ring as ammonia and one of its carbon atoms as CO2. The polypeptide is Ureidoacrylate amidohydrolase RutB (Agrobacterium fabrum (strain C58 / ATCC 33970) (Agrobacterium tumefaciens (strain C58))).